The following is a 192-amino-acid chain: UPF0149 protein YgfB (192 aa).

This sequence belongs to the UPF0149 family.

In Salmonella typhi, this protein is UPF0149 protein YgfB.